The primary structure comprises 248 residues: Probable cyclic nucleotide phosphodiesterase CBUA0032 (248 aa).

Fe cation is bound by residues Asp13, His15, Asp52, Asn82, His152, His191, and His193. AMP-binding positions include His15, Asp52, and 82-83; that span reads NH. His193 contributes to the AMP binding site.

The protein belongs to the cyclic nucleotide phosphodiesterase class-III family. It depends on Fe(2+) as a cofactor.

In Coxiella burnetii (strain RSA 493 / Nine Mile phase I), this protein is Probable cyclic nucleotide phosphodiesterase CBUA0032.